Reading from the N-terminus, the 111-residue chain is Large ribosomal subunit protein P2B (111 aa).

Residues 62-111 form a disordered region; sequence LASVPSGGAAAGGASASTGAAAGGAAEAEEEKEEEAKEESDDDMGFGLFD. The span at 67-87 shows a compositional bias: low complexity; the sequence is SGGAAAGGASASTGAAAGGAA. Over residues 88 to 105 the composition is skewed to acidic residues; it reads EAEEEKEEEAKEESDDDM. Serine 101 carries the phosphoserine modification.

The protein belongs to the eukaryotic ribosomal protein P1/P2 family.

Its function is as follows. Plays an important role in the elongation step of protein synthesis. The polypeptide is Large ribosomal subunit protein P2B (RPP2B) (Candida albicans (Yeast)).